The sequence spans 456 residues: PTS system sucrose-specific EIIBC component (456 aa).

The PTS EIIB type-1 domain occupies 4–87 (EQISCSLLPL…TQAAGISESS (84 aa)). Catalysis depends on cysteine 26, which acts as the Phosphocysteine intermediate; for EIIB activity. The 350-residue stretch at 107–456 (RLLSNIFVPI…LVLKYKTDAE (350 aa)) folds into the PTS EIIC type-1 domain. 10 helical membrane-spanning segments follow: residues 112–132 (IFVPIIPAIVASGLLMGLLGM), 144–164 (AIYIMLDMCSSAAFIILPILI), 181–201 (TLGGILTHPALTNAWGVAAGF), 213–233 (MIGYQGTVFPVLLAVWFMSIV), 247–267 (LILTPFLTVIISGFIALLIIG), 288–308 (AGWLAGLLFGGLYSVIVITGI), 329–349 (FLLPIWAMANVAQGGACLAVW), 360–380 (ITLPSAFSAMLGITEAAIFGI), 388–408 (FIAALIGGAAGGAWVVSVHVY), and 428–448 (LLNYIIGMVIAFGVAFTVSLV).

The protein localises to the cell inner membrane. It catalyses the reaction N(pros)-phospho-L-histidyl-[protein](out) + sucrose = sucrose 6(G)-phosphate(in) + L-histidyl-[protein]. Its function is as follows. The phosphoenolpyruvate-dependent sugar phosphotransferase system (sugar PTS), a major carbohydrate active transport system, catalyzes the phosphorylation of incoming sugar substrates concomitantly with their translocation across the cell membrane. This system is involved in sucrose transport. This chain is PTS system sucrose-specific EIIBC component, found in Salmonella typhimurium.